Here is a 223-residue protein sequence, read N- to C-terminus: DNA mismatch repair protein MutH (223 aa).

This sequence belongs to the MutH family.

It localises to the cytoplasm. Its function is as follows. Sequence-specific endonuclease that cleaves unmethylated GATC sequences. It is involved in DNA mismatch repair. The protein is DNA mismatch repair protein MutH of Shewanella baltica (strain OS195).